The chain runs to 450 residues: Phosphoglucosamine mutase (450 aa).

The active-site Phosphoserine intermediate is the Ser-101. Residues Ser-101, Asp-240, Asp-242, and Asp-244 each contribute to the Mg(2+) site. Ser-101 carries the phosphoserine modification.

This sequence belongs to the phosphohexose mutase family. The cofactor is Mg(2+). Post-translationally, activated by phosphorylation.

The enzyme catalyses alpha-D-glucosamine 1-phosphate = D-glucosamine 6-phosphate. In terms of biological role, catalyzes the conversion of glucosamine-6-phosphate to glucosamine-1-phosphate. The sequence is that of Phosphoglucosamine mutase from Streptococcus thermophilus (strain CNRZ 1066).